A 143-amino-acid chain; its full sequence is Antitumor antibiotic C-1027 apoprotein (143 aa).

An N-terminal signal peptide occupies residues 1 to 33 (MSLRHMSRRASRFGVVAVASIGLAAAAQSVAFA). Intrachain disulfides connect Cys-69–Cys-78 and Cys-119–Cys-124.

The protein belongs to the neocarzinostatin family.

Its function is as follows. Binds non-covalently to a chromophore which is the cytotoxic and mutagenic component of the antibiotic. The chromophore binds to DNA as a weak intercalator and causes single- and double-strand breaks. This is Antitumor antibiotic C-1027 apoprotein (cagA) from Streptomyces globisporus.